The primary structure comprises 41 residues: Large ribosomal subunit protein bL36 (41 aa).

The protein belongs to the bacterial ribosomal protein bL36 family.

This Novosphingobium aromaticivorans (strain ATCC 700278 / DSM 12444 / CCUG 56034 / CIP 105152 / NBRC 16084 / F199) protein is Large ribosomal subunit protein bL36.